We begin with the raw amino-acid sequence, 360 residues long: Phospho-N-acetylmuramoyl-pentapeptide-transferase (360 aa).

10 helical membrane passes run 27-47 (VMAV…LIRF), 71-91 (TPTM…LLWA), 98-118 (VWIV…DDYL), 142-162 (LVLA…TFVM), 168-188 (YMPY…VGSS), 199-219 (GLAI…AYLT), 236-256 (ASEL…FLWF), 263-283 (VFMG…IAVL), 288-308 (ILLV…ILQV), and 338-358 (VIVR…VTLK).

The protein belongs to the glycosyltransferase 4 family. MraY subfamily. Mg(2+) serves as cofactor.

It is found in the cell inner membrane. It carries out the reaction UDP-N-acetyl-alpha-D-muramoyl-L-alanyl-gamma-D-glutamyl-meso-2,6-diaminopimeloyl-D-alanyl-D-alanine + di-trans,octa-cis-undecaprenyl phosphate = di-trans,octa-cis-undecaprenyl diphospho-N-acetyl-alpha-D-muramoyl-L-alanyl-D-glutamyl-meso-2,6-diaminopimeloyl-D-alanyl-D-alanine + UMP. It participates in cell wall biogenesis; peptidoglycan biosynthesis. Catalyzes the initial step of the lipid cycle reactions in the biosynthesis of the cell wall peptidoglycan: transfers peptidoglycan precursor phospho-MurNAc-pentapeptide from UDP-MurNAc-pentapeptide onto the lipid carrier undecaprenyl phosphate, yielding undecaprenyl-pyrophosphoryl-MurNAc-pentapeptide, known as lipid I. This is Phospho-N-acetylmuramoyl-pentapeptide-transferase from Psychromonas ingrahamii (strain DSM 17664 / CCUG 51855 / 37).